The chain runs to 253 residues: Adenylate kinase (253 aa).

Residue 15-20 coordinates ATP; it reads GSGKGT. Residues 35–64 form an NMP region; the sequence is SSGDLLRNAVSQNTPLGQEIKSYLDQGKLL. AMP-binding positions include Ser-36, Arg-41, 62-64, 103-106, and Gln-110; these read KLL and GFPR. Residues 143–176 are LID; the sequence is SRYICPSCQGIYNKQQGFSRCPKCLVELTRRSDD. Arg-144 lines the ATP pocket. Zn(2+) is bound by residues Cys-147 and Cys-150. 153–154 is a binding site for ATP; that stretch reads IY. 2 residues coordinate Zn(2+): Cys-163 and Cys-166. Residues Arg-173 and Arg-184 each coordinate AMP. An ATP-binding site is contributed by Ala-212.

This sequence belongs to the adenylate kinase family. Monomer.

The protein resides in the cytoplasm. It catalyses the reaction AMP + ATP = 2 ADP. It participates in purine metabolism; AMP biosynthesis via salvage pathway; AMP from ADP: step 1/1. In terms of biological role, catalyzes the reversible transfer of the terminal phosphate group between ATP and AMP. Plays an important role in cellular energy homeostasis and in adenine nucleotide metabolism. The protein is Adenylate kinase of Chlamydia muridarum (strain MoPn / Nigg).